We begin with the raw amino-acid sequence, 467 residues long: UPF0236 protein TTE0033/TTE0744/TTE0838/TTE0852/TTE1082/TTE1247/TTE1519/TTE1678/TTE1739/TTE1823/TTE2212 (467 aa).

It belongs to the UPF0236 family.

This Caldanaerobacter subterraneus subsp. tengcongensis (strain DSM 15242 / JCM 11007 / NBRC 100824 / MB4) (Thermoanaerobacter tengcongensis) protein is UPF0236 protein TTE0033/TTE0744/TTE0838/TTE0852/TTE1082/TTE1247/TTE1519/TTE1678/TTE1739/TTE1823/TTE2212.